We begin with the raw amino-acid sequence, 371 residues long: Glutamate 5-kinase (371 aa).

Lysine 10 serves as a coordination point for ATP. Substrate is bound by residues serine 50, aspartate 137, and asparagine 149. Residues 169–170 and 208–214 each bind ATP; these read SD and TGGMFTK. Positions 274 to 352 constitute a PUA domain; it reads EGRIYIDDGA…EEIRNILGED (79 aa).

It belongs to the glutamate 5-kinase family.

It localises to the cytoplasm. The enzyme catalyses L-glutamate + ATP = L-glutamyl 5-phosphate + ADP. It functions in the pathway amino-acid biosynthesis; L-proline biosynthesis; L-glutamate 5-semialdehyde from L-glutamate: step 1/2. Its function is as follows. Catalyzes the transfer of a phosphate group to glutamate to form L-glutamate 5-phosphate. The protein is Glutamate 5-kinase of Dictyoglomus turgidum (strain DSM 6724 / Z-1310).